The following is a 398-amino-acid chain: tRNA-specific 2-thiouridylase MnmA (398 aa).

Residues 20-27 (AMSGGVDS) and leucine 46 contribute to the ATP site. Cysteine 114 functions as the Nucleophile in the catalytic mechanism. The cysteines at positions 114 and 210 are disulfide-linked. Glycine 138 serves as a coordination point for ATP. The segment at 160-162 (RDQ) is interaction with tRNA. The active-site Cysteine persulfide intermediate is the cysteine 210.

Belongs to the MnmA/TRMU family.

Its subcellular location is the cytoplasm. The catalysed reaction is S-sulfanyl-L-cysteinyl-[protein] + uridine(34) in tRNA + AH2 + ATP = 2-thiouridine(34) in tRNA + L-cysteinyl-[protein] + A + AMP + diphosphate + H(+). Functionally, catalyzes the 2-thiolation of uridine at the wobble position (U34) of tRNA, leading to the formation of s(2)U34. The polypeptide is tRNA-specific 2-thiouridylase MnmA (Brucella abortus (strain S19)).